A 92-amino-acid polypeptide reads, in one-letter code: Signal recognition particle 19 kDa protein (92 aa).

Belongs to the SRP19 family. Part of the signal recognition particle protein translocation system, which is composed of SRP and FtsY. Archaeal SRP consists of a 7S RNA molecule of 300 nucleotides and two protein subunits: SRP54 and SRP19.

It is found in the cytoplasm. Involved in targeting and insertion of nascent membrane proteins into the cytoplasmic membrane. Binds directly to 7S RNA and mediates binding of the 54 kDa subunit of the SRP. In Haloferax volcanii (strain ATCC 29605 / DSM 3757 / JCM 8879 / NBRC 14742 / NCIMB 2012 / VKM B-1768 / DS2) (Halobacterium volcanii), this protein is Signal recognition particle 19 kDa protein.